The following is a 316-amino-acid chain: Pantothenate kinase (316 aa).

Residue 95–102 coordinates ATP; sequence GSVAVGKS.

The protein belongs to the prokaryotic pantothenate kinase family.

It localises to the cytoplasm. The enzyme catalyses (R)-pantothenate + ATP = (R)-4'-phosphopantothenate + ADP + H(+). Its pathway is cofactor biosynthesis; coenzyme A biosynthesis; CoA from (R)-pantothenate: step 1/5. This chain is Pantothenate kinase, found in Shewanella sp. (strain ANA-3).